Consider the following 157-residue polypeptide: Crossover junction endodeoxyribonuclease RuvC (157 aa).

Active-site residues include Asp-7, Glu-67, and Asp-139. Residues Asp-7, Glu-67, and Asp-139 each coordinate Mg(2+).

It belongs to the RuvC family. As to quaternary structure, homodimer which binds Holliday junction (HJ) DNA. The HJ becomes 2-fold symmetrical on binding to RuvC with unstacked arms; it has a different conformation from HJ DNA in complex with RuvA. In the full resolvosome a probable DNA-RuvA(4)-RuvB(12)-RuvC(2) complex forms which resolves the HJ. It depends on Mg(2+) as a cofactor.

The protein localises to the cytoplasm. It catalyses the reaction Endonucleolytic cleavage at a junction such as a reciprocal single-stranded crossover between two homologous DNA duplexes (Holliday junction).. Its function is as follows. The RuvA-RuvB-RuvC complex processes Holliday junction (HJ) DNA during genetic recombination and DNA repair. Endonuclease that resolves HJ intermediates. Cleaves cruciform DNA by making single-stranded nicks across the HJ at symmetrical positions within the homologous arms, yielding a 5'-phosphate and a 3'-hydroxyl group; requires a central core of homology in the junction. The consensus cleavage sequence is 5'-(A/T)TT(C/G)-3'. Cleavage occurs on the 3'-side of the TT dinucleotide at the point of strand exchange. HJ branch migration catalyzed by RuvA-RuvB allows RuvC to scan DNA until it finds its consensus sequence, where it cleaves and resolves the cruciform DNA. This Prochlorococcus marinus (strain MIT 9301) protein is Crossover junction endodeoxyribonuclease RuvC.